A 24-amino-acid polypeptide reads, in one-letter code: RuBisCO large subunit-binding protein subunit beta, chloroplastic (24 aa).

It belongs to the chaperonin (HSP60) family. Oligomer of probably six alpha and six beta subunits.

It is found in the plastid. The protein resides in the chloroplast. Its function is as follows. This protein binds RuBisCO small and large subunits and is implicated in the assembly of the enzyme oligomer. This is RuBisCO large subunit-binding protein subunit beta, chloroplastic from Populus euphratica (Euphrates poplar).